The primary structure comprises 130 residues: 3-hydroxyisobutyrate dehydrogenase, mitochondrial (130 aa).

NAD(+)-binding positions include 1–17 (TPVGFIGLGNMGNPMAK), 25–26 (LP), and Asn-30. Lys-43 carries the post-translational modification N6-acetyllysine. Lys-47 carries the N6-acetyllysine; alternate modification. At Lys-47 the chain carries N6-succinyllysine; alternate. An N6-succinyllysine modification is found at Lys-101.

The protein belongs to the HIBADH-related family. 3-hydroxyisobutyrate dehydrogenase subfamily. In terms of assembly, homodimer.

The protein resides in the mitochondrion. It catalyses the reaction 3-hydroxy-2-methylpropanoate + NAD(+) = 2-methyl-3-oxopropanoate + NADH + H(+). It functions in the pathway amino-acid degradation; L-valine degradation. This chain is 3-hydroxyisobutyrate dehydrogenase, mitochondrial, found in Mesocricetus auratus (Golden hamster).